Reading from the N-terminus, the 394-residue chain is 3-hydroxybenzoate 6-hydroxylase 1 (394 aa).

It belongs to the 3-hydroxybenzoate 6-hydroxylase family. In terms of assembly, homotrimer. FAD serves as cofactor.

The catalysed reaction is 3-hydroxybenzoate + NADH + O2 + H(+) = 2,5-dihydroxybenzoate + NAD(+) + H2O. With respect to regulation, inhibited by manganese, copper, mercury, and iron ions. In terms of biological role, catalyzes the NAD- or NADP-dependent conversion of 3-hydroxybenzoate to gentisate. The affinity of the enzyme toward NAD is twice as high as for NADP. The enzyme shows higher specific activities against the intermediates in the degradation of 2,5-xylenol and 3,5-xylenol, 3-hydroxy-4-methylbenzoate and 3-hydroxy-5-methylbenzoate, respectively, than for 3-hydroxybenzoate. It also shows activity against 3-substituted benzoates. The chain is 3-hydroxybenzoate 6-hydroxylase 1 (xlnD) from Aquipseudomonas alcaligenes (Pseudomonas alcaligenes).